We begin with the raw amino-acid sequence, 180 residues long: Small ribosomal subunit protein uS5 (180 aa).

Residues 13-76 enclose the S5 DRBM domain; that stretch reads LEERVVQINR…EAAKKNLIRV (64 aa).

It belongs to the universal ribosomal protein uS5 family. As to quaternary structure, part of the 30S ribosomal subunit. Contacts proteins S4 and S8.

Its function is as follows. With S4 and S12 plays an important role in translational accuracy. Located at the back of the 30S subunit body where it stabilizes the conformation of the head with respect to the body. The chain is Small ribosomal subunit protein uS5 from Roseiflexus sp. (strain RS-1).